Consider the following 89-residue polypeptide: Acylphosphatase (89 aa).

The 86-residue stretch at 4–89 (SYIAHISGRV…WQEHHFFSIG (86 aa)) folds into the Acylphosphatase-like domain. Residues Arg-19 and Asn-37 contribute to the active site.

It belongs to the acylphosphatase family.

The catalysed reaction is an acyl phosphate + H2O = a carboxylate + phosphate + H(+). The polypeptide is Acylphosphatase (acyP) (Colwellia psychrerythraea (strain 34H / ATCC BAA-681) (Vibrio psychroerythus)).